We begin with the raw amino-acid sequence, 516 residues long: Flavin-dependent halogenase armH2 (516 aa).

Residues Gly-16, Ala-19, and Glu-49 each contribute to the FAD site. Residues Ser-328 and Gly-329 each coordinate chloride. Position 330 (Ile-330) interacts with FAD. The interval 440–475 is disordered; it reads PQANGNGAAKQDAVPAPIPVALSSGAGPEKDAKRRE.

This sequence belongs to the flavin-dependent halogenase family.

The catalysed reaction is melleolide F + FADH2 + chloride + O2 = 6'-chloromelleolide F + FAD + 2 H2O + H(+). Its function is as follows. Flavin-dependent halogenase involved in the biosynthesis of melleolides, a range of antifungal and phytotoxic polyketide derivatives composed of an orsellinic acid (OA) moiety esterified to various sesquiterpene alcohols. The halogenase catalyzes the transfer of a single chlorine atom to the melleolide backbone, resulting in a 6'-chloromelleolide product. The enzyme acts on free substrate and does not depend on carrier-protein-dependent acceptor molecules. This is Flavin-dependent halogenase armH2 from Armillaria mellea (Honey mushroom).